Reading from the N-terminus, the 429-residue chain is UDP-N-acetylglucosamine 1-carboxyvinyltransferase (429 aa).

A phosphoenolpyruvate-binding site is contributed by 22–23 (KN). Residue arginine 102 coordinates UDP-N-acetyl-alpha-D-glucosamine. Catalysis depends on cysteine 126, which acts as the Proton donor. Residue cysteine 126 is modified to 2-(S-cysteinyl)pyruvic acid O-phosphothioketal. Residues 131–135 (RPVDL), aspartate 316, and isoleucine 338 contribute to the UDP-N-acetyl-alpha-D-glucosamine site.

The protein belongs to the EPSP synthase family. MurA subfamily.

Its subcellular location is the cytoplasm. It catalyses the reaction phosphoenolpyruvate + UDP-N-acetyl-alpha-D-glucosamine = UDP-N-acetyl-3-O-(1-carboxyvinyl)-alpha-D-glucosamine + phosphate. The protein operates within cell wall biogenesis; peptidoglycan biosynthesis. Cell wall formation. Adds enolpyruvyl to UDP-N-acetylglucosamine. The protein is UDP-N-acetylglucosamine 1-carboxyvinyltransferase of Nitrobacter winogradskyi (strain ATCC 25391 / DSM 10237 / CIP 104748 / NCIMB 11846 / Nb-255).